Reading from the N-terminus, the 351-residue chain is Putative aryl-alcohol dehydrogenase C977.14c (351 aa).

Ser113 carries the post-translational modification Phosphoserine.

Belongs to the aldo/keto reductase family. Aldo/keto reductase 2 subfamily.

It is found in the cytoplasm. The protein localises to the nucleus. The protein is Putative aryl-alcohol dehydrogenase C977.14c of Schizosaccharomyces pombe (strain 972 / ATCC 24843) (Fission yeast).